Here is a 108-residue protein sequence, read N- to C-terminus: Pyrimidine/purine nucleoside phosphorylase (108 aa).

It belongs to the nucleoside phosphorylase PpnP family.

It carries out the reaction a purine D-ribonucleoside + phosphate = a purine nucleobase + alpha-D-ribose 1-phosphate. The catalysed reaction is adenosine + phosphate = alpha-D-ribose 1-phosphate + adenine. The enzyme catalyses cytidine + phosphate = cytosine + alpha-D-ribose 1-phosphate. It catalyses the reaction guanosine + phosphate = alpha-D-ribose 1-phosphate + guanine. It carries out the reaction inosine + phosphate = alpha-D-ribose 1-phosphate + hypoxanthine. The catalysed reaction is thymidine + phosphate = 2-deoxy-alpha-D-ribose 1-phosphate + thymine. The enzyme catalyses uridine + phosphate = alpha-D-ribose 1-phosphate + uracil. It catalyses the reaction xanthosine + phosphate = alpha-D-ribose 1-phosphate + xanthine. Functionally, catalyzes the phosphorolysis of diverse nucleosides, yielding D-ribose 1-phosphate and the respective free bases. Can use uridine, adenosine, guanosine, cytidine, thymidine, inosine and xanthosine as substrates. Also catalyzes the reverse reactions. The protein is Pyrimidine/purine nucleoside phosphorylase of Polaromonas naphthalenivorans (strain CJ2).